A 737-amino-acid polypeptide reads, in one-letter code: Polyribonucleotide nucleotidyltransferase (737 aa).

Mg(2+)-binding residues include Asp-489 and Asp-495. The KH domain occupies 556 to 615 (PKIDTIKIDVDKIKIVIGKGGETIDKIIAETGVKIDIDEEGNVSIYSSDQDAINRAKEII). Residues 625–693 (DEVYRAKVVR…EKGRIDASMK (69 aa)) form the S1 motif domain. The tract at residues 691 to 737 (SMKALLPRPPKPEHDEKGEKSERPHRPRHHKDHKPKKEFTETPKDSE) is disordered. Positions 700–714 (PKPEHDEKGEKSERP) are enriched in basic and acidic residues. Basic residues predominate over residues 715 to 724 (HRPRHHKDHK). The span at 725-737 (PKKEFTETPKDSE) shows a compositional bias: basic and acidic residues.

This sequence belongs to the polyribonucleotide nucleotidyltransferase family. Mg(2+) is required as a cofactor.

The protein localises to the cytoplasm. The catalysed reaction is RNA(n+1) + phosphate = RNA(n) + a ribonucleoside 5'-diphosphate. Functionally, involved in mRNA degradation. Catalyzes the phosphorolysis of single-stranded polyribonucleotides processively in the 3'- to 5'-direction. The polypeptide is Polyribonucleotide nucleotidyltransferase (Streptococcus pneumoniae (strain 70585)).